Consider the following 118-residue polypeptide: Small ribosomal subunit protein uS13 (118 aa).

A disordered region spans residues 93 to 118 (RGLPVRGQRTKTNARTRKGPRKPIRK).

It belongs to the universal ribosomal protein uS13 family. In terms of assembly, part of the 30S ribosomal subunit. Forms a loose heterodimer with protein S19. Forms two bridges to the 50S subunit in the 70S ribosome.

Located at the top of the head of the 30S subunit, it contacts several helices of the 16S rRNA. In the 70S ribosome it contacts the 23S rRNA (bridge B1a) and protein L5 of the 50S subunit (bridge B1b), connecting the 2 subunits; these bridges are implicated in subunit movement. Contacts the tRNAs in the A and P-sites. This is Small ribosomal subunit protein uS13 from Pseudomonas fluorescens (strain Pf0-1).